Consider the following 670-residue polypeptide: UvrABC system protein B (670 aa).

The 387-residue stretch at 28-414 (NNFKQGLQEQ…KKIPIVEQII (387 aa)) folds into the Helicase ATP-binding domain. 41-48 (GATGTGKT) serves as a coordination point for ATP. The Beta-hairpin signature appears at 94–117 (YYDYYQPEAYVASSDTYIEKDSKI). The region spanning 432–594 (QMDDLYFEIK…VTPTALNKTI (163 aa)) is the Helicase C-terminal domain. One can recognise a UVR domain in the interval 631–666 (NKEIKRLQKMMKEAAKTLDFEKAATLRDLILELEKK).

The protein belongs to the UvrB family. Forms a heterotetramer with UvrA during the search for lesions. Interacts with UvrC in an incision complex.

It localises to the cytoplasm. In terms of biological role, the UvrABC repair system catalyzes the recognition and processing of DNA lesions. A damage recognition complex composed of 2 UvrA and 2 UvrB subunits scans DNA for abnormalities. Upon binding of the UvrA(2)B(2) complex to a putative damaged site, the DNA wraps around one UvrB monomer. DNA wrap is dependent on ATP binding by UvrB and probably causes local melting of the DNA helix, facilitating insertion of UvrB beta-hairpin between the DNA strands. Then UvrB probes one DNA strand for the presence of a lesion. If a lesion is found the UvrA subunits dissociate and the UvrB-DNA preincision complex is formed. This complex is subsequently bound by UvrC and the second UvrB is released. If no lesion is found, the DNA wraps around the other UvrB subunit that will check the other stand for damage. This is UvrABC system protein B from Onion yellows phytoplasma (strain OY-M).